Reading from the N-terminus, the 376-residue chain is MMTNKVSLSRLKLTDFRNYAAAALVLDERHVVLTGDNGSGKTNLLEAVSFLSPGRGLRRAVLSDVTRVGAEATGFSIFADVDGMDGEVAIGTGIEGDGEVVSRRLRLNGTPVKSVDELTDHLRVLWLTPAMDGLFTGSSSDRRRFLDRLVLSLDPGHGRRASDFEKAMRGRNRLLSEGRFDPVWLDGIEKQMAELGISMAVARYEMLGLLKTLIEGRAGNAAFPSATLSLAGFMDDRLNRPAVDLEDEYGLMLRDGRYRDAAAGRTLDGPHRVDLFVRHAEKNMEAERCSTGEQKALLVGLVLAHAQLTANMTGYAPVLLLDEIAAHLDEGRRAALFDLIHALGGQSFMTGTDAAMFSALGERAQFFNVSHGGITA.

G35 to T42 is a binding site for ATP.

The protein belongs to the RecF family.

Its subcellular location is the cytoplasm. Functionally, the RecF protein is involved in DNA metabolism; it is required for DNA replication and normal SOS inducibility. RecF binds preferentially to single-stranded, linear DNA. It also seems to bind ATP. The polypeptide is DNA replication and repair protein RecF (Agrobacterium fabrum (strain C58 / ATCC 33970) (Agrobacterium tumefaciens (strain C58))).